A 95-amino-acid chain; its full sequence is Small ribosomal subunit protein uS19 (95 aa).

Positions 73–95 (EFSPTRSYRGHGADKNAKGSKKK) are disordered.

This sequence belongs to the universal ribosomal protein uS19 family.

In terms of biological role, protein S19 forms a complex with S13 that binds strongly to the 16S ribosomal RNA. The sequence is that of Small ribosomal subunit protein uS19 from Deinococcus deserti (strain DSM 17065 / CIP 109153 / LMG 22923 / VCD115).